A 295-amino-acid polypeptide reads, in one-letter code: Protoheme IX farnesyltransferase 2 (295 aa).

A run of 9 helical transmembrane segments spans residues 9 to 29, 36 to 56, 80 to 100, 108 to 128, 135 to 155, 163 to 183, 209 to 229, 230 to 250, and 265 to 285; these read ITKP…FFLA, LAVF…GCVF, LISL…GVAL, LAAL…SLYL, GTLV…VAVT, LTLL…IAIF, ILIY…SGYA, GMSY…MAWT, and FVFS…DFKV.

The protein belongs to the UbiA prenyltransferase family. Protoheme IX farnesyltransferase subfamily.

It localises to the cell inner membrane. The catalysed reaction is heme b + (2E,6E)-farnesyl diphosphate + H2O = Fe(II)-heme o + diphosphate. It functions in the pathway porphyrin-containing compound metabolism; heme O biosynthesis; heme O from protoheme: step 1/1. Functionally, converts heme B (protoheme IX) to heme O by substitution of the vinyl group on carbon 2 of heme B porphyrin ring with a hydroxyethyl farnesyl side group. This is Protoheme IX farnesyltransferase 2 from Pseudomonas fluorescens (strain Pf0-1).